Here is a 483-residue protein sequence, read N- to C-terminus: Membrane-bound lytic murein transglycosylase F (483 aa).

A signal peptide spans M1–A18. The tract at residues W19–L267 is non-LT domain. The tract at residues H269–E483 is LT domain. E312 is a catalytic residue. The tract at residues Q458–E483 is disordered. Over residues I473–E483 the composition is skewed to basic and acidic residues.

This sequence in the N-terminal section; belongs to the bacterial solute-binding protein 3 family. In the C-terminal section; belongs to the transglycosylase Slt family.

The protein resides in the cell outer membrane. The enzyme catalyses Exolytic cleavage of the (1-&gt;4)-beta-glycosidic linkage between N-acetylmuramic acid (MurNAc) and N-acetylglucosamine (GlcNAc) residues in peptidoglycan, from either the reducing or the non-reducing ends of the peptidoglycan chains, with concomitant formation of a 1,6-anhydrobond in the MurNAc residue.. In terms of biological role, murein-degrading enzyme that degrades murein glycan strands and insoluble, high-molecular weight murein sacculi, with the concomitant formation of a 1,6-anhydromuramoyl product. Lytic transglycosylases (LTs) play an integral role in the metabolism of the peptidoglycan (PG) sacculus. Their lytic action creates space within the PG sacculus to allow for its expansion as well as for the insertion of various structures such as secretion systems and flagella. This chain is Membrane-bound lytic murein transglycosylase F, found in Actinobacillus pleuropneumoniae serotype 5b (strain L20).